A 108-amino-acid polypeptide reads, in one-letter code: Phosphoribosyl-ATP pyrophosphatase (108 aa).

This sequence belongs to the PRA-PH family.

Its subcellular location is the cytoplasm. It carries out the reaction 1-(5-phospho-beta-D-ribosyl)-ATP + H2O = 1-(5-phospho-beta-D-ribosyl)-5'-AMP + diphosphate + H(+). Its pathway is amino-acid biosynthesis; L-histidine biosynthesis; L-histidine from 5-phospho-alpha-D-ribose 1-diphosphate: step 2/9. This Trichlorobacter lovleyi (strain ATCC BAA-1151 / DSM 17278 / SZ) (Geobacter lovleyi) protein is Phosphoribosyl-ATP pyrophosphatase.